The chain runs to 503 residues: ATP synthase subunit alpha (503 aa).

An ATP-binding site is contributed by 170-177 (GDRQTGKT).

The protein belongs to the ATPase alpha/beta chains family. In terms of assembly, F-type ATPases have 2 components, CF(1) - the catalytic core - and CF(0) - the membrane proton channel. CF(1) has five subunits: alpha(3), beta(3), gamma(1), delta(1), epsilon(1). CF(0) has three main subunits: a(1), b(2) and c(9-12). The alpha and beta chains form an alternating ring which encloses part of the gamma chain. CF(1) is attached to CF(0) by a central stalk formed by the gamma and epsilon chains, while a peripheral stalk is formed by the delta and b chains.

Its subcellular location is the cell membrane. The catalysed reaction is ATP + H2O + 4 H(+)(in) = ADP + phosphate + 5 H(+)(out). Its function is as follows. Produces ATP from ADP in the presence of a proton gradient across the membrane. The alpha chain is a regulatory subunit. This is ATP synthase subunit alpha from Brevibacillus brevis (strain 47 / JCM 6285 / NBRC 100599).